We begin with the raw amino-acid sequence, 1080 residues long: DNA-directed RNA polymerase subunit beta (1080 aa).

Belongs to the RNA polymerase beta chain family. As to quaternary structure, in plastids the minimal PEP RNA polymerase catalytic core is composed of four subunits: alpha, beta, beta', and beta''. When a (nuclear-encoded) sigma factor is associated with the core the holoenzyme is formed, which can initiate transcription.

It localises to the plastid. The protein resides in the chloroplast. It catalyses the reaction RNA(n) + a ribonucleoside 5'-triphosphate = RNA(n+1) + diphosphate. Its function is as follows. DNA-dependent RNA polymerase catalyzes the transcription of DNA into RNA using the four ribonucleoside triphosphates as substrates. The polypeptide is DNA-directed RNA polymerase subunit beta (Mesostigma viride (Green alga)).